We begin with the raw amino-acid sequence, 218 residues long: Synaptonemal complex central element protein 2 (218 aa).

The segment covering 1–32 has biased composition (basic and acidic residues); the sequence is MERQGVDVPHVKCKDQEPQPLGESKEHPRWEE. Residues 1–42 are disordered; sequence MERQGVDVPHVKCKDQEPQPLGESKEHPRWEENCEEEAGGGP. The stretch at 61–87 forms a coiled coil; that stretch reads SSLDSSIDILQKRAQELIENINKSRQK. A disordered region spans residues 171-218; sequence RWGPDHSRGKSPPRPGNSQPPDVFVSSVAETTSQATASEVQTNRDGEC. The segment covering 198–211 has biased composition (polar residues); sequence VAETTSQATASEVQ.

This sequence belongs to the SYCE family. Homodimer. Found in a complex with SYCP1 and SYCE1. Interacts with SYCP1, SYCE1 and SYCE3. Interacts with TEX12.

The protein resides in the nucleus. It is found in the chromosome. Major component of the transverse central element of synaptonemal complexes (SCS), formed between homologous chromosomes during meiotic prophase. Requires SYCP1 in order to be incorporated into the central element. May have a role in the synaptonemal complex assembly, stabilization and recombination. The protein is Synaptonemal complex central element protein 2 (SYCE2) of Homo sapiens (Human).